The primary structure comprises 141 residues: VLSADDKANVKAAWGKLGGHGAEYGAEALGRMFCSFPTTKTYFPHFDVSHGSAQVKGHGAKVADALTTAAGHLDDLPGALSALSDLHAHKLRVDPVNFKLLSHCLLVTLAAHHPAEFTPAVHASLDKFLASVSTVLTSKYR.

The 141-residue stretch at 1–141 (VLSADDKANV…VSTVLTSKYR (141 aa)) folds into the Globin domain. Ser3 carries the post-translational modification Phosphoserine. Lys7 and Lys11 each carry N6-succinyllysine. Residue Lys16 is modified to N6-acetyllysine; alternate. Lys16 is modified (N6-succinyllysine; alternate). The residue at position 24 (Tyr24) is a Phosphotyrosine. Ser35 bears the Phosphoserine mark. Lys40 carries the N6-succinyllysine modification. Residue Ser49 is modified to Phosphoserine. An O2-binding site is contributed by His58. His87 serves as a coordination point for heme b. Ser102 carries the phosphoserine modification. Residue Thr108 is modified to Phosphothreonine. Phosphoserine occurs at positions 124 and 131. Residues Thr134 and Thr137 each carry the phosphothreonine modification. Ser138 carries the post-translational modification Phosphoserine.

This sequence belongs to the globin family. Heterotetramer of two alpha chains and two beta chains. As to expression, red blood cells.

In terms of biological role, involved in oxygen transport from the lung to the various peripheral tissues. This Peromyscus californicus (California mouse) protein is Hemoglobin subunit alpha.